Consider the following 363-residue polypeptide: NADH-quinone oxidoreductase subunit H (363 aa).

10 helical membrane passes run Val29–Trp49, Gly62–Phe82, Phe96–Phe116, Val127–Gly147, Ala163–Ala183, Phe202–Val222, Glu238–Leu257, Trp278–Trp298, Lys299–Phe319, and Phe339–Ile359.

It belongs to the complex I subunit 1 family. As to quaternary structure, NDH-1 is composed of 14 different subunits. Subunits NuoA, H, J, K, L, M, N constitute the membrane sector of the complex.

Its subcellular location is the cell inner membrane. It carries out the reaction a quinone + NADH + 5 H(+)(in) = a quinol + NAD(+) + 4 H(+)(out). In terms of biological role, NDH-1 shuttles electrons from NADH, via FMN and iron-sulfur (Fe-S) centers, to quinones in the respiratory chain. The immediate electron acceptor for the enzyme in this species is believed to be ubiquinone. Couples the redox reaction to proton translocation (for every two electrons transferred, four hydrogen ions are translocated across the cytoplasmic membrane), and thus conserves the redox energy in a proton gradient. This subunit may bind ubiquinone. In Xanthomonas oryzae pv. oryzae (strain MAFF 311018), this protein is NADH-quinone oxidoreductase subunit H.